The sequence spans 176 residues: MSMATIARPYAKAIFDFAVEHHSIEHWQNMLAFSAQVSAHKQVTQWLSGVMHSEKTAQIFISLCSDHLDEFSKNFIKIMAQNGRLSLLPEVLKQFMALRAMINSVIDIEVFSAIPLNEDQKKKIIFALEKRLQLKVTLNCKIDESILAGVIIRHGDRVIDGSVSNRLKRLKNFLLS.

This sequence belongs to the ATPase delta chain family. In terms of assembly, F-type ATPases have 2 components, F(1) - the catalytic core - and F(0) - the membrane proton channel. F(1) has five subunits: alpha(3), beta(3), gamma(1), delta(1), epsilon(1). F(0) has three main subunits: a(1), b(2) and c(10-14). The alpha and beta chains form an alternating ring which encloses part of the gamma chain. F(1) is attached to F(0) by a central stalk formed by the gamma and epsilon chains, while a peripheral stalk is formed by the delta and b chains.

The protein localises to the cell membrane. Functionally, f(1)F(0) ATP synthase produces ATP from ADP in the presence of a proton or sodium gradient. F-type ATPases consist of two structural domains, F(1) containing the extramembraneous catalytic core and F(0) containing the membrane proton channel, linked together by a central stalk and a peripheral stalk. During catalysis, ATP synthesis in the catalytic domain of F(1) is coupled via a rotary mechanism of the central stalk subunits to proton translocation. This protein is part of the stalk that links CF(0) to CF(1). It either transmits conformational changes from CF(0) to CF(1) or is implicated in proton conduction. The chain is ATP synthase subunit delta from Hamiltonella defensa subsp. Acyrthosiphon pisum (strain 5AT).